A 413-amino-acid chain; its full sequence is MALIVQKFGGTSVGSVERIEQVADKVKKFRDAGDDLVVVLSAMSGETNRLIDLAKAISGDQQPLPRELDVIVSTGEQVTIALLAMALNKRGVPAVSYTGSQVRILTDSAHTKARILQIDDQKIRTDLKAGRVVVVAGFQGVDEQGNITTLGRGGSDTTGVALAAALKADECQIYTDVDGVYTTDPRVVSVAQRLDKITFEEMLEMASLGSKVLQIRAVEFAGKYNVPLRVLHSFKEGPGTLITIDEEESMEQPIISGIAFNRDEAKLTIRGVPDTPGVAFKILGPISGANIEVDMIVQNVSHDNTTDFTFTVHRNEYDAAERILQNTAKEIGAREVVGDTKIAKVSIVGVGMRSHAGVASRMFEALAKESINIQMISTSEIKVSVVIEEKYLELAVRALHTAFELDAPARQGE.

ACT domains follow at residues 267–341 (LTIR…GDTK) and 347–413 (IVGV…RQGE).

It belongs to the aspartokinase family. As to quaternary structure, homotrimer. In the presence of inhibitory amino acids the Stokes radius of the protein increases, suggesting its oligomeric state may change.

The protein resides in the cytoplasm. The catalysed reaction is L-aspartate + ATP = 4-phospho-L-aspartate + ADP. Its pathway is amino-acid biosynthesis; L-lysine biosynthesis via DAP pathway; (S)-tetrahydrodipicolinate from L-aspartate: step 1/4. It functions in the pathway amino-acid biosynthesis; L-methionine biosynthesis via de novo pathway; L-homoserine from L-aspartate: step 1/3. It participates in amino-acid biosynthesis; L-threonine biosynthesis; L-threonine from L-aspartate: step 1/5. With respect to regulation, activated by L-lysine, L-methionine, and L-isoleucine. L-threonine, at low concentrations, is a mild activator and has a weak inhibitory effect only at concentrations over 10 mM. Strongly feedback inhibited by the concerted combination of L-lysine and L-threonine and slightly feedback inhibited by the concerted combination of L-threonine and L-methionine. Activated by the combination of L-methionine and L-lysine, L-methionine and L-isoleucine and L-lysine and L-isoleucine. Its function is as follows. Involved in the biosynthesis of L-aspartate-beta-semialdehyde which is a central intermediate in the biosynthesis of different amino acids (L-lysine, L-methionine, L-threonine). Catalyzes the phosphorylation of the beta-carboxyl group of L-aspartate to yield 4-phospho-L-aspartate. The chain is Aspartate kinase from Pseudomonas fluorescens (strain SBW25).